A 659-amino-acid chain; its full sequence is Replication protein E1 (659 aa).

Positions 30–57 (RTGDTVSSDEDEEEDGGEDLVDFIDDRP) are disordered. Residues 36–52 (SSDEDEEEDGGEDLVDF) are compositionally biased toward acidic residues. The Nuclear localization signal motif lies at 85-87 (KRK). Phosphoserine; by host is present on residues serine 91, serine 95, serine 108, and serine 121. Residues 107-116 (LSPRLDAIKL) carry the Nuclear export signal motif. Residues 134 to 195 (GYGQTQVDTE…DGEESQTESV (62 aa)) form a disordered region. Residues 135–160 (YGQTQVDTESGPKQVQDICKTSQQDG) show a composition bias toward polar residues. Residues 196–362 (QTDTTACGVL…QTVVGHALEE (167 aa)) form a DNA-binding region region. The SF3 helicase domain maps to 461-611 (VEFIPFLCAL…FPLTTQGEPL (151 aa)). 487–494 (GPADTGKS) is an ATP binding site. Lysine 568 is covalently cross-linked (Glycyl lysine isopeptide (Lys-Gly) (interchain with G-Cter in SUMO)). The segment at 634–659 (DPEDEEDNGNTSEPFRCVPGQNTRTV) is disordered.

It belongs to the papillomaviridae E1 protein family. Can form hexamers. Interacts with E2 protein; this interaction increases E1 DNA binding specificity. Interacts with host DNA polymerase subunit POLA2. Interacts with host single stranded DNA-binding protein RPA1. Interacts with host TOP1; this interaction stimulates the enzymatic activity of TOP1. Post-translationally, phosphorylated. Sumoylated.

The protein localises to the host nucleus. The catalysed reaction is Couples ATP hydrolysis with the unwinding of duplex DNA by translocating in the 3'-5' direction.. It carries out the reaction ATP + H2O = ADP + phosphate + H(+). Its function is as follows. ATP-dependent DNA 3'-5' helicase required for initiation of viral DNA replication. It forms a complex with the viral E2 protein. The E1-E2 complex binds to the replication origin which contains binding sites for both proteins. During the initial step, a dimer of E1 interacts with a dimer of protein E2 leading to a complex that binds the viral origin of replication with high specificity. Then, a second dimer of E1 displaces the E2 dimer in an ATP-dependent manner to form the E1 tetramer. Following this, two E1 monomers are added to each half of the site, which results in the formation of two E1 trimers on the viral ori. Subsequently, two hexamers will be created. The double hexamer acts as a bi-directional helicase machinery and unwinds the viral DNA and then recruits the host DNA polymerase to start replication. In Homo sapiens (Human), this protein is Replication protein E1.